The chain runs to 340 residues: NADH-quinone oxidoreductase subunit H (340 aa).

The next 8 helical transmembrane spans lie at 4-24, 78-98, 113-133, 151-171, 184-204, 244-264, 273-293, and 316-336; these read TIGI…PLLI, YLFV…WAVI, VLYL…AGWA, VSYE…AGSM, MLHW…IAGI, SMIL…LSPF, IFFV…FLFV, and VLIP…VAHV.

It belongs to the complex I subunit 1 family. In terms of assembly, NDH-1 is composed of 14 different subunits. Subunits NuoA, H, J, K, L, M, N constitute the membrane sector of the complex.

The protein resides in the cell inner membrane. It carries out the reaction a quinone + NADH + 5 H(+)(in) = a quinol + NAD(+) + 4 H(+)(out). NDH-1 shuttles electrons from NADH, via FMN and iron-sulfur (Fe-S) centers, to quinones in the respiratory chain. The immediate electron acceptor for the enzyme in this species is believed to be ubiquinone. Couples the redox reaction to proton translocation (for every two electrons transferred, four hydrogen ions are translocated across the cytoplasmic membrane), and thus conserves the redox energy in a proton gradient. This subunit may bind ubiquinone. In Legionella pneumophila (strain Corby), this protein is NADH-quinone oxidoreductase subunit H.